Consider the following 552-residue polypeptide: uncharacterized protein (552 aa).

4 helical membrane-spanning segments follow: residues 127-147 (AIMLSFILILFQPFFIIISLL), 160-180 (LIIVTCIILSTLIALLSYINI), 393-413 (LTKQISLFLSISLFLCCLSAV), and 517-537 (VIDSWFDEVYAFACVFTFICI).

It is found in the membrane. This is an uncharacterized protein from Saccharomyces cerevisiae (strain ATCC 204508 / S288c) (Baker's yeast).